A 200-amino-acid chain; its full sequence is Holliday junction branch migration complex subunit RuvA (200 aa).

The interval 1 to 63 is domain I; the sequence is MYAYIKGTLS…EDAQLLYGFI (63 aa). The interval 64 to 142 is domain II; that stretch reads NEEEKEMFLS…ITEENSDDLL (79 aa). The flexible linker stretch occupies residues 143 to 149; sequence QTQVNGN. Positions 150–200 are domain III; the sequence is EQNQIISEALLALQALGYSKRELTKVEKSLNKHNVNSVDEAVKIGLQTLVS.

Belongs to the RuvA family. Homotetramer. Forms an RuvA(8)-RuvB(12)-Holliday junction (HJ) complex. HJ DNA is sandwiched between 2 RuvA tetramers; dsDNA enters through RuvA and exits via RuvB. An RuvB hexamer assembles on each DNA strand where it exits the tetramer. Each RuvB hexamer is contacted by two RuvA subunits (via domain III) on 2 adjacent RuvB subunits; this complex drives branch migration. In the full resolvosome a probable DNA-RuvA(4)-RuvB(12)-RuvC(2) complex forms which resolves the HJ.

It localises to the cytoplasm. Functionally, the RuvA-RuvB-RuvC complex processes Holliday junction (HJ) DNA during genetic recombination and DNA repair, while the RuvA-RuvB complex plays an important role in the rescue of blocked DNA replication forks via replication fork reversal (RFR). RuvA specifically binds to HJ cruciform DNA, conferring on it an open structure. The RuvB hexamer acts as an ATP-dependent pump, pulling dsDNA into and through the RuvAB complex. HJ branch migration allows RuvC to scan DNA until it finds its consensus sequence, where it cleaves and resolves the cruciform DNA. This chain is Holliday junction branch migration complex subunit RuvA, found in Staphylococcus epidermidis (strain ATCC 35984 / DSM 28319 / BCRC 17069 / CCUG 31568 / BM 3577 / RP62A).